The chain runs to 217 residues: L-lactate dehydrogenase B chain (217 aa).

Asn22 provides a ligand contact to NAD(+). Substrate is bound by residues Asn22 and Arg53. His77 acts as the Proton acceptor in catalysis. Tyr123 bears the Phosphotyrosine mark. Thr132 is a binding site for substrate. Lys212 is subject to N6-acetyllysine.

Belongs to the LDH/MDH superfamily. LDH family. As to quaternary structure, homotetramer. Interacts with PTEN upstream reading frame protein MP31; the interaction leads to inhibition of mitochondrial lactate dehydrogenase activity, preventing conversion of lactate to pyruvate in mitochondria.

The protein localises to the cytoplasm. Its subcellular location is the mitochondrion inner membrane. It carries out the reaction (S)-lactate + NAD(+) = pyruvate + NADH + H(+). The protein operates within fermentation; pyruvate fermentation to lactate; (S)-lactate from pyruvate: step 1/1. Interconverts simultaneously and stereospecifically pyruvate and lactate with concomitant interconversion of NADH and NAD(+). In Oryctolagus cuniculus (Rabbit), this protein is L-lactate dehydrogenase B chain (LDHB).